A 370-amino-acid chain; its full sequence is Chorismate synthase (370 aa).

Arginine 48 lines the NADP(+) pocket. FMN contacts are provided by residues 125-127 (RSS), 241-242 (NA), glycine 285, 300-304 (KPTSS), and arginine 326.

The protein belongs to the chorismate synthase family. Homotetramer. FMNH2 serves as cofactor.

The enzyme catalyses 5-O-(1-carboxyvinyl)-3-phosphoshikimate = chorismate + phosphate. It functions in the pathway metabolic intermediate biosynthesis; chorismate biosynthesis; chorismate from D-erythrose 4-phosphate and phosphoenolpyruvate: step 7/7. In terms of biological role, catalyzes the anti-1,4-elimination of the C-3 phosphate and the C-6 proR hydrogen from 5-enolpyruvylshikimate-3-phosphate (EPSP) to yield chorismate, which is the branch point compound that serves as the starting substrate for the three terminal pathways of aromatic amino acid biosynthesis. This reaction introduces a second double bond into the aromatic ring system. This chain is Chorismate synthase, found in Jannaschia sp. (strain CCS1).